Here is a 123-residue protein sequence, read N- to C-terminus: Large ribosomal subunit protein bL20 (123 aa).

Residues 1–15 show a composition bias toward basic residues; sequence MARVKRSVNAKKKRR. The segment at 1–23 is disordered; the sequence is MARVKRSVNAKKKRREVLDQASG.

It belongs to the bacterial ribosomal protein bL20 family.

Functionally, binds directly to 23S ribosomal RNA and is necessary for the in vitro assembly process of the 50S ribosomal subunit. It is not involved in the protein synthesizing functions of that subunit. The protein is Large ribosomal subunit protein bL20 of Cutibacterium acnes (strain DSM 16379 / KPA171202) (Propionibacterium acnes).